A 314-amino-acid polypeptide reads, in one-letter code: MSRPRRRGRDIHGVLLLDKPQGMSSNDVLQKVKRIYNANRAGHTGALDPLATGMLPICLGEATKFSQYLLDSDKRYRVIARLGQRTDTSDADGQIVQERPVTFSAEQLASALETFRGDIEQIPSMYSALKYQGKKLYEYARQGIEVPREARPITVYELLFIRHEGNELELEVHCSKGTYIRTIIDDLGEKLGCGAHVTYLRRLTVSKYPVDRMVTLEHLQTLVAQAEQQGVPAAQLLDPLLMPMDSPASDYPVVNLPLTSSVYFKNGNPVRTTGAPLKGLVRVTEGEDDKFIGMGEIDDEGRVAPRRLVVDYPA.

Histidine 43 contributes to the substrate binding site. Aspartate 48 serves as the catalytic Nucleophile. Tyrosine 76, tyrosine 179, and leucine 200 together coordinate substrate.

Belongs to the pseudouridine synthase TruB family. Type 1 subfamily.

The catalysed reaction is uridine(55) in tRNA = pseudouridine(55) in tRNA. Its function is as follows. Responsible for synthesis of pseudouridine from uracil-55 in the psi GC loop of transfer RNAs. In Salmonella paratyphi B (strain ATCC BAA-1250 / SPB7), this protein is tRNA pseudouridine synthase B.